A 331-amino-acid polypeptide reads, in one-letter code: Elongation factor Ts, mitochondrial (331 aa).

Residues 1 to 14 (MIVSRQVIRSVVRK) constitute a mitochondrion transit peptide.

It belongs to the EF-Ts family.

It localises to the mitochondrion. Functionally, associates with the EF-Tu.GDP complex and induces the exchange of GDP to GTP. It remains bound to the aminoacyl-tRNA.EF-Tu.GTP complex up to the GTP hydrolysis stage on the ribosome. The polypeptide is Elongation factor Ts, mitochondrial (Brugia malayi (Filarial nematode worm)).